We begin with the raw amino-acid sequence, 618 residues long: Leucine aminopeptidase 2 (618 aa).

A peptide-binding positions include 140 to 142 and 272 to 277; these read QCQ and PYGGME. H301 lines the Zn(2+) pocket. E302 serves as the catalytic Proton acceptor. Residues H305 and E324 each coordinate Zn(2+). Y389 (proton donor) is an active-site residue.

This sequence belongs to the peptidase M1 family. It depends on Zn(2+) as a cofactor.

The protein localises to the cytoplasm. It is found in the nucleus. It catalyses the reaction an epoxide + H2O = an ethanediol. In terms of biological role, aminopeptidase that preferentially cleaves di- and tripeptides. Also has low epoxide hydrolase activity (in vitro). Can hydrolyze the epoxide leukotriene LTA(4) but it forms preferentially 5,6-dihydroxy-7,9,11,14-eicosatetraenoic acid rather than the cytokine leukotriene B(4) as the product compared to the homologous mammalian enzyme (in vitro). The protein is Leucine aminopeptidase 2 of Emericella nidulans (strain FGSC A4 / ATCC 38163 / CBS 112.46 / NRRL 194 / M139) (Aspergillus nidulans).